Consider the following 330-residue polypeptide: Tetraacyldisaccharide 4'-kinase (330 aa).

An ATP-binding site is contributed by 58–65 (TVGGSGKT).

The protein belongs to the LpxK family.

It catalyses the reaction a lipid A disaccharide + ATP = a lipid IVA + ADP + H(+). It participates in glycolipid biosynthesis; lipid IV(A) biosynthesis; lipid IV(A) from (3R)-3-hydroxytetradecanoyl-[acyl-carrier-protein] and UDP-N-acetyl-alpha-D-glucosamine: step 6/6. Its function is as follows. Transfers the gamma-phosphate of ATP to the 4'-position of a tetraacyldisaccharide 1-phosphate intermediate (termed DS-1-P) to form tetraacyldisaccharide 1,4'-bis-phosphate (lipid IVA). The sequence is that of Tetraacyldisaccharide 4'-kinase from Shewanella pealeana (strain ATCC 700345 / ANG-SQ1).